Reading from the N-terminus, the 295-residue chain is 33 kDa chaperonin (295 aa).

2 disulfides stabilise this stretch: C236/C238 and C269/C272.

This sequence belongs to the HSP33 family. In terms of processing, under oxidizing conditions two disulfide bonds are formed involving the reactive cysteines. Under reducing conditions zinc is bound to the reactive cysteines and the protein is inactive.

It is found in the cytoplasm. In terms of biological role, redox regulated molecular chaperone. Protects both thermally unfolding and oxidatively damaged proteins from irreversible aggregation. Plays an important role in the bacterial defense system toward oxidative stress. The protein is 33 kDa chaperonin of Geobacter sp. (strain M21).